A 302-amino-acid chain; its full sequence is MAEITAALVRELREATGAGMMDCKKALTEAAGDMEAAIDWLRTKGLSQAAKKSGRTTAEGLVGVASAKNRAAMVEVNAETDFVGRNEAFQAFVEQVAHVALEVGDDLDAIKAGKVPSGRTVADELTHLIATIGENMAIRRAKVLSVESGVVASYVHSALRPGIGKIGVLAALEAPSESDALLTLGRQIGMHVAATRPAALDVASVDPEALERERAVLIEQARESGKPEAIIEKMVEGRIRKFYEEVVLLEQVWVLDGESRVAKVVEKAGAKLVGFERFQLGEGIEKEESDFAAEVAAAAGTK.

Residues 80–83 (TDFV) are involved in Mg(2+) ion dislocation from EF-Tu.

This sequence belongs to the EF-Ts family.

The protein resides in the cytoplasm. Functionally, associates with the EF-Tu.GDP complex and induces the exchange of GDP to GTP. It remains bound to the aminoacyl-tRNA.EF-Tu.GTP complex up to the GTP hydrolysis stage on the ribosome. The chain is Elongation factor Ts from Gluconobacter oxydans (strain 621H) (Gluconobacter suboxydans).